Consider the following 461-residue polypeptide: Photosystem II CP43 reaction center protein (461 aa).

Positions 1 to 2 (ME) are excised as a propeptide. Residue T3 is modified to N-acetylthreonine. A Phosphothreonine modification is found at T3. 5 helical membrane passes run 57–81 (LFEV…PHLA), 122–143 (LAGP…KRKK), 166–188 (KAMY…RSIT), 243–263 (RPSP…LSYS), and 279–300 (WFNN…ASQA). E355 provides a ligand contact to [CaMn4O5] cluster. The chain crosses the membrane as a helical span at residues 435–459 (RARAAAIGFEKGIDRSREIARKLKP).

This sequence belongs to the PsbB/PsbC family. PsbC subfamily. As to quaternary structure, PSII is composed of 1 copy each of membrane proteins PsbA, PsbB, PsbC, PsbD, PsbE, PsbF, PsbH, PsbI, PsbJ, PsbK, PsbL, PsbM, PsbT, PsbY, PsbZ, Psb30/Ycf12, at least 3 peripheral proteins of the oxygen-evolving complex and a large number of cofactors. It forms dimeric complexes. Binds multiple chlorophylls and provides some of the ligands for the Ca-4Mn-5O cluster of the oxygen-evolving complex. It may also provide a ligand for a Cl- that is required for oxygen evolution. PSII binds additional chlorophylls, carotenoids and specific lipids. is required as a cofactor.

The protein localises to the plastid. It localises to the chloroplast thylakoid membrane. In terms of biological role, one of the components of the core complex of photosystem II (PSII). It binds chlorophyll and helps catalyze the primary light-induced photochemical processes of PSII. PSII is a light-driven water:plastoquinone oxidoreductase, using light energy to abstract electrons from H(2)O, generating O(2) and a proton gradient subsequently used for ATP formation. The protein is Photosystem II CP43 reaction center protein of Euglena gracilis.